The chain runs to 613 residues: DNA mismatch repair protein MutL (613 aa).

Belongs to the DNA mismatch repair MutL/HexB family.

Functionally, this protein is involved in the repair of mismatches in DNA. It is required for dam-dependent methyl-directed DNA mismatch repair. May act as a 'molecular matchmaker', a protein that promotes the formation of a stable complex between two or more DNA-binding proteins in an ATP-dependent manner without itself being part of a final effector complex. In Janthinobacterium sp. (strain Marseille) (Minibacterium massiliensis), this protein is DNA mismatch repair protein MutL.